The chain runs to 729 residues: Polyribonucleotide nucleotidyltransferase (729 aa).

Asp516 and Asp522 together coordinate Mg(2+). Residues 581–641 form the KH domain; sequence PSTEHFSINP…EKVAAAKEHI (61 aa). One can recognise an S1 motif domain in the interval 658-725; sequence GKTYVGKVKK…KGKKVELATP (68 aa).

Belongs to the polyribonucleotide nucleotidyltransferase family. Requires Mg(2+) as cofactor.

The protein localises to the cytoplasm. It carries out the reaction RNA(n+1) + phosphate = RNA(n) + a ribonucleoside 5'-diphosphate. Its function is as follows. Involved in mRNA degradation. Catalyzes the phosphorolysis of single-stranded polyribonucleotides processively in the 3'- to 5'-direction. This is Polyribonucleotide nucleotidyltransferase from Sulfurovum sp. (strain NBC37-1).